The chain runs to 130 residues: Small ribosomal subunit protein uS9 (130 aa).

Belongs to the universal ribosomal protein uS9 family.

The protein is Small ribosomal subunit protein uS9 of Burkholderia ambifaria (strain MC40-6).